The following is a 46-amino-acid chain: Large ribosomal subunit protein bL34 (46 aa).

Residues 25–46 (TASGRQVLRRRRAKGRYRLAVS) are disordered. Over residues 31–46 (VLRRRRAKGRYRLAVS) the composition is skewed to basic residues.

It belongs to the bacterial ribosomal protein bL34 family.

This chain is Large ribosomal subunit protein bL34, found in Synechococcus sp. (strain JA-3-3Ab) (Cyanobacteria bacterium Yellowstone A-Prime).